The sequence spans 498 residues: ATP synthase subunit beta, chloroplastic (498 aa).

Glycine 172–threonine 179 contacts ATP.

Belongs to the ATPase alpha/beta chains family. F-type ATPases have 2 components, CF(1) - the catalytic core - and CF(0) - the membrane proton channel. CF(1) has five subunits: alpha(3), beta(3), gamma(1), delta(1), epsilon(1). CF(0) has four main subunits: a(1), b(1), b'(1) and c(9-12).

The protein localises to the plastid. Its subcellular location is the chloroplast thylakoid membrane. The enzyme catalyses ATP + H2O + 4 H(+)(in) = ADP + phosphate + 5 H(+)(out). In terms of biological role, produces ATP from ADP in the presence of a proton gradient across the membrane. The catalytic sites are hosted primarily by the beta subunits. This Panax ginseng (Korean ginseng) protein is ATP synthase subunit beta, chloroplastic.